The sequence spans 203 residues: E3 ubiquitin-protein ligase RNF152 (203 aa).

The RING-type zinc finger occupies 12–55 (CQICFNYYSPRRRPKLLDCKHTCCSVCLQQMRTSQKDVRCPWCR). Residues 106 to 165 (ISKERALLPGDMGCRLLPGSQQKSVTVVTIPAEQQPLQGGAPQEAVEEEQDRRGVVKSST) form a necessary for interaction with RRAGA region. Residues 167-187 (SGVCTVILVACVLVFLLGIVL) traverse the membrane as a helical segment.

This sequence belongs to the RNF152 family. Interacts with RRAGA (inactive GDP-bound form); stimulated by amino acid starvation. Interacts with SEC16A. In terms of processing, ubiquitinated. Autoubiquitinated in vitro, leading to its degradation by the proteasome. In terms of tissue distribution, widely expressed.

The protein resides in the lysosome membrane. The catalysed reaction is S-ubiquitinyl-[E2 ubiquitin-conjugating enzyme]-L-cysteine + [acceptor protein]-L-lysine = [E2 ubiquitin-conjugating enzyme]-L-cysteine + N(6)-ubiquitinyl-[acceptor protein]-L-lysine.. It functions in the pathway protein modification; protein ubiquitination. Functionally, E3 ubiquitin-protein ligase that acts as a negative regulator of mTORC1 signaling by mediating ubiquitination of RagA/RRAGA and RHEB. Catalyzes 'Lys-63'-linked polyubiquitination of RagA/RRAGA in response to amino acid starvation, thereby regulating mTORC1 signaling. Also mediates monoubiquitination of RHEB, promoting its association with the TSC-TBC complex and subsequent inhibition. Also mediates 'Lys-48'-linked polyubiquitination of target proteins and their subsequent targeting to the proteasome for degradation. Induces apoptosis when overexpressed. The sequence is that of E3 ubiquitin-protein ligase RNF152 from Homo sapiens (Human).